Reading from the N-terminus, the 760-residue chain is Prolyl endopeptidase FAP (760 aa).

Residues 1-4 (MKTW) lie on the Cytoplasmic side of the membrane. The helical; Signal-anchor for type II membrane protein transmembrane segment at 5 to 25 (VKIVFGVATSAVLALLVMCIV) threads the bilayer. At 26–760 (LRPSRVHNSE…FLKQCFSLSD (735 aa)) the chain is on the extracellular side. Residues N49, N92, and N99 are each glycosylated (N-linked (GlcNAc...) asparagine). 2 residues coordinate substrate: E203 and E204. N-linked (GlcNAc...) asparagine glycans are attached at residues N227 and N314. 3 cysteine pairs are disulfide-bonded: C321–C332, C438–C441, and C448–C466. The active-site Charge relay system is S624. C643 and C755 are oxidised to a cystine. The N-linked (GlcNAc...) asparagine glycan is linked to N679. Residues D702 and H734 each act as charge relay system in the active site.

Belongs to the peptidase S9B family. As to quaternary structure, homodimer; homodimerization is required for activity of both plasma membrane and soluble forms. The monomer is inactive. Heterodimer with DPP4. Interacts with PLAUR; the interaction occurs at the cell surface of invadopodia membranes. Interacts with ITGB1. Interacts with ITGA3. Associates with integrin alpha-3/beta-1; the association occurs in a collagen-dependent manner at the cell surface of invadopodia membranes. Post-translationally, N-glycosylated. The N-terminus may be blocked. Expressed in adipose tissue. Expressed in the dermal fibroblasts in the fetal skin. Expressed in the granulation tissue of healing wounds and on reactive stromal fibroblast in epithelial cancers. Expressed in activated fibroblast-like synoviocytes from inflamed synovial tissues. Expressed in activated hepatic stellate cells (HSC) and myofibroblasts from cirrhotic liver, but not detected in normal liver. Expressed in glioma cells (at protein level). Expressed in glioblastomas and glioma cells. Isoform 1 and isoform 2 are expressed in melanoma, carcinoma and fibroblast cell lines.

It localises to the cell surface. The protein localises to the cell membrane. It is found in the cell projection. The protein resides in the lamellipodium membrane. Its subcellular location is the invadopodium membrane. It localises to the ruffle membrane. The protein localises to the membrane. It is found in the secreted. The protein resides in the cytoplasm. It catalyses the reaction Hydrolysis of Pro-|-Xaa &gt;&gt; Ala-|-Xaa in oligopeptides.. The enzyme catalyses Release of an N-terminal dipeptide, Xaa-Yaa-|-Zaa-, from a polypeptide, preferentially when Yaa is Pro, provided Zaa is neither Pro nor hydroxyproline.. With respect to regulation, gelatinase activity is inhibited by serine-protease inhibitors, such as phenylmethylsulfonyl fluoride (PMSF), 4-(2-aminoethyl)-benzenesulfonyl fluoride hydrochloride (AEBSF), 4-amidino phenylsulfonyl fluoride (APSF) and diisopropyl fluorophosphate (DFP), N-ethylmaleimide (NEM) and phenylmethylsulfonyl fluoride (PMSF). Dipeptidyl peptidase activity is inhibited by 2,2'-azino-bis(3-ethylbenzthiazoline-6-sulfonic acid), diisopropylfluorophosphate (DFP). Prolyl endopeptidase activity is inhibited by the boronic acid peptide Ac-Gly-BoroPro, Ac-Gly-Pro-chloromethyl ketone and Thr-Ser-Gly-chloromethyl ketone. Cell surface glycoprotein serine protease that participates in extracellular matrix degradation and involved in many cellular processes including tissue remodeling, fibrosis, wound healing, inflammation and tumor growth. Both plasma membrane and soluble forms exhibit post-proline cleaving endopeptidase activity, with a marked preference for Ala/Ser-Gly-Pro-Ser/Asn/Ala consensus sequences, on substrate such as alpha-2-antiplasmin SERPINF2 and SPRY2. Degrade also gelatin, heat-denatured type I collagen, but not native collagen type I and IV, vitronectin, tenascin, laminin, fibronectin, fibrin or casein. Also has dipeptidyl peptidase activity, exhibiting the ability to hydrolyze the prolyl bond two residues from the N-terminus of synthetic dipeptide substrates provided that the penultimate residue is proline, with a preference for Ala-Pro, Ile-Pro, Gly-Pro, Arg-Pro and Pro-Pro. Natural neuropeptide hormones for dipeptidyl peptidase are the neuropeptide Y (NPY), peptide YY (PYY), substance P (TAC1) and brain natriuretic peptide 32 (NPPB). The plasma membrane form, in association with either DPP4, PLAUR or integrins, is involved in the pericellular proteolysis of the extracellular matrix (ECM), and hence promotes cell adhesion, migration and invasion through the ECM. Plays a role in tissue remodeling during development and wound healing. Participates in the cell invasiveness towards the ECM in malignant melanoma cancers. Enhances tumor growth progression by increasing angiogenesis, collagen fiber degradation and apoptosis and by reducing antitumor response of the immune system. Promotes glioma cell invasion through the brain parenchyma by degrading the proteoglycan brevican. Acts as a tumor suppressor in melanocytic cells through regulation of cell proliferation and survival in a serine protease activity-independent manner. The polypeptide is Prolyl endopeptidase FAP (Homo sapiens (Human)).